The primary structure comprises 85 residues: Large ribosomal subunit protein bL31B (85 aa).

The protein belongs to the bacterial ribosomal protein bL31 family. Type B subfamily. As to quaternary structure, part of the 50S ribosomal subunit.

In Serratia proteamaculans (strain 568), this protein is Large ribosomal subunit protein bL31B.